The sequence spans 134 residues: MSSDRKVLSFEEVSKHNKTKDCWLIISGKVYDVTPFMDDHPGGDEVLLSSTGKDATNDFEDVGHSDTARDMMDKYFIGEIDSSSVPATRTYVAPQQPAYNQDKTPEFIIKILQFLVPILILGLALVVRHYTKKD.

One can recognise a Cytochrome b5 heme-binding domain in the interval Arg-5–Asp-81. Residues His-40 and His-64 each coordinate heme. Residues Phe-107–Val-127 traverse the membrane as a helical segment. The AKR2A-binding sequence (ABS) required for endoplasmic reticulum membrane targeting signature appears at Arg-128–Asp-134.

Belongs to the cytochrome b5 family. In terms of assembly, interacts with CER1, BI-1, FAH1 and FAH2. Interacts with AKR2A. As to expression, expressed in roots, stems, leaves, flowers and siliques.

It localises to the cell membrane. It is found in the endoplasmic reticulum membrane. Membrane bound hemoprotein which function as an electron carrier for several membrane bound oxygenases, including fatty acid desaturases. The chain is Cytochrome b5 isoform E (CYTB5-E) from Arabidopsis thaliana (Mouse-ear cress).